Here is a 151-residue protein sequence, read N- to C-terminus: Sec-independent protein translocase protein TatB (151 aa).

The helical transmembrane segment at 1-21 (MFDIGFLELLICGVIALLVLG) threads the bilayer. Basic and acidic residues-rich tracts occupy residues 87–99 (KYEH…DQTR) and 122–132 (EPPHEPVRDEA). Residues 87–151 (KYEHMILPDD…SPTSPSDKYS (65 aa)) are disordered. Over residues 134 to 151 (ASDQPSDSSPTSPSDKYS) the composition is skewed to low complexity.

This sequence belongs to the TatB family. The Tat system comprises two distinct complexes: a TatABC complex, containing multiple copies of TatA, TatB and TatC subunits, and a separate TatA complex, containing only TatA subunits. Substrates initially bind to the TatABC complex, which probably triggers association of the separate TatA complex to form the active translocon.

The protein resides in the cell inner membrane. Its function is as follows. Part of the twin-arginine translocation (Tat) system that transports large folded proteins containing a characteristic twin-arginine motif in their signal peptide across membranes. Together with TatC, TatB is part of a receptor directly interacting with Tat signal peptides. TatB may form an oligomeric binding site that transiently accommodates folded Tat precursor proteins before their translocation. In Marinobacter nauticus (strain ATCC 700491 / DSM 11845 / VT8) (Marinobacter aquaeolei), this protein is Sec-independent protein translocase protein TatB.